We begin with the raw amino-acid sequence, 102 residues long: Small ribosomal subunit protein uS10 (102 aa).

Belongs to the universal ribosomal protein uS10 family. In terms of assembly, part of the 30S ribosomal subunit.

Its function is as follows. Involved in the binding of tRNA to the ribosomes. The protein is Small ribosomal subunit protein uS10 of Streptococcus pneumoniae (strain Taiwan19F-14).